A 469-amino-acid polypeptide reads, in one-letter code: Cysteine--tRNA ligase (469 aa).

Position 29 (Cys29) interacts with Zn(2+). The 'HIGH' region signature appears at 31 to 41; the sequence is PTVYNYIHIGN. Zn(2+)-binding residues include Cys210, His235, and Glu239. Positions 267 to 271 match the 'KMSKS' region motif; sequence KMSKS. Position 270 (Lys270) interacts with ATP.

Belongs to the class-I aminoacyl-tRNA synthetase family. Monomer. The cofactor is Zn(2+).

The protein resides in the cytoplasm. It catalyses the reaction tRNA(Cys) + L-cysteine + ATP = L-cysteinyl-tRNA(Cys) + AMP + diphosphate. The chain is Cysteine--tRNA ligase from Thermosipho africanus (strain TCF52B).